A 399-amino-acid polypeptide reads, in one-letter code: Succinate--CoA ligase [ADP-forming] subunit beta (399 aa).

The ATP-grasp domain occupies 9 to 254 (KAVLAEFGAP…ESEEDPKEIE (246 aa)). ATP-binding positions include Lys-46, 53 to 55 (GRG), Glu-109, Ala-112, and Glu-117. Mg(2+) is bound by residues Asn-209 and Asp-223. Substrate is bound by residues Asn-274 and 331–333 (GIM).

This sequence belongs to the succinate/malate CoA ligase beta subunit family. Heterotetramer of two alpha and two beta subunits. Mg(2+) is required as a cofactor.

It catalyses the reaction succinate + ATP + CoA = succinyl-CoA + ADP + phosphate. The catalysed reaction is GTP + succinate + CoA = succinyl-CoA + GDP + phosphate. Its pathway is carbohydrate metabolism; tricarboxylic acid cycle; succinate from succinyl-CoA (ligase route): step 1/1. Functionally, succinyl-CoA synthetase functions in the citric acid cycle (TCA), coupling the hydrolysis of succinyl-CoA to the synthesis of either ATP or GTP and thus represents the only step of substrate-level phosphorylation in the TCA. The beta subunit provides nucleotide specificity of the enzyme and binds the substrate succinate, while the binding sites for coenzyme A and phosphate are found in the alpha subunit. The polypeptide is Succinate--CoA ligase [ADP-forming] subunit beta (Caulobacter vibrioides (strain NA1000 / CB15N) (Caulobacter crescentus)).